The sequence spans 564 residues: Pyruvate decarboxylase (564 aa).

2 residues coordinate pyruvate: Asp-28 and His-115. Thiamine diphosphate is bound by residues Thr-390 and 413–415 (GSI). Mg(2+) is bound at residue Asp-444. Residues 445 to 446 (GS) and 471 to 476 (NDGYTI) each bind thiamine diphosphate. Residues Asn-471 and Gly-473 each contribute to the Mg(2+) site. Glu-477 is a binding site for pyruvate.

Belongs to the TPP enzyme family. As to quaternary structure, homotetramer. It depends on Mg(2+) as a cofactor. Thiamine diphosphate is required as a cofactor.

It carries out the reaction a 2-oxocarboxylate + H(+) = an aldehyde + CO2. The catalysed reaction is pyruvate + H(+) = acetaldehyde + CO2. The chain is Pyruvate decarboxylase (PDC1) from Kluyveromyces marxianus (Yeast).